A 153-amino-acid polypeptide reads, in one-letter code: Endoribonuclease YbeY (153 aa).

Positions 114, 118, and 124 each coordinate Zn(2+).

This sequence belongs to the endoribonuclease YbeY family. It depends on Zn(2+) as a cofactor.

The protein localises to the cytoplasm. Single strand-specific metallo-endoribonuclease involved in late-stage 70S ribosome quality control and in maturation of the 3' terminus of the 16S rRNA. This Shewanella sp. (strain MR-7) protein is Endoribonuclease YbeY.